A 692-amino-acid chain; its full sequence is Elongation factor G (692 aa).

The 275-residue stretch at 8–282 (DKTRNIGIMA…AVLDYLPAPT (275 aa)) folds into the tr-type G domain. GTP contacts are provided by residues 17-24 (AHIDAGKT), 81-85 (DTPGH), and 135-138 (NKMD).

Belongs to the TRAFAC class translation factor GTPase superfamily. Classic translation factor GTPase family. EF-G/EF-2 subfamily.

It localises to the cytoplasm. In terms of biological role, catalyzes the GTP-dependent ribosomal translocation step during translation elongation. During this step, the ribosome changes from the pre-translocational (PRE) to the post-translocational (POST) state as the newly formed A-site-bound peptidyl-tRNA and P-site-bound deacylated tRNA move to the P and E sites, respectively. Catalyzes the coordinated movement of the two tRNA molecules, the mRNA and conformational changes in the ribosome. In Bacillus pumilus (strain SAFR-032), this protein is Elongation factor G.